Here is a 331-residue protein sequence, read N- to C-terminus: Putative serine/threonine-protein kinase ZK507.1 (331 aa).

The region spanning 1–270 (MKVNEEGFAI…CKLTLKEPLV (270 aa)) is the Protein kinase domain. The Proton acceptor role is filled by Asp116. The span at 302–314 (SDRNEENSLDRSK) shows a compositional bias: basic and acidic residues. Positions 302 to 331 (SDRNEENSLDRSKTGTLSFNNSKNKKPSRY) are disordered.

Belongs to the protein kinase superfamily. Ser/Thr protein kinase family.

It catalyses the reaction L-seryl-[protein] + ATP = O-phospho-L-seryl-[protein] + ADP + H(+). The enzyme catalyses L-threonyl-[protein] + ATP = O-phospho-L-threonyl-[protein] + ADP + H(+). The chain is Putative serine/threonine-protein kinase ZK507.1 from Caenorhabditis elegans.